A 323-amino-acid chain; its full sequence is Pseudouridylate synthase TRUB2, mitochondrial (323 aa).

The Nucleophile role is filled by Asp98. Residues 302-323 form a disordered region; that stretch reads SGHQQQLPSAGQPWASRVQAPL.

It belongs to the pseudouridine synthase TruB family. As to quaternary structure, forms a regulatory protein-RNA complex, consisting of RCC1L, NGRN, RPUSD3, RPUSD4, TRUB2, FASTKD2 and 16S mt-rRNA.

The protein localises to the mitochondrion matrix. It carries out the reaction a uridine in mRNA = a pseudouridine in mRNA. The catalysed reaction is uridine(55) in tRNA = pseudouridine(55) in tRNA. Minor enzyme contributing to the isomerization of uridine to pseudouridine (pseudouridylation) of specific mitochondrial mRNAs (mt-mRNAs) such as COXI and COXIII mt-mRNAs. As a component of a functional protein-RNA module, consisting of RCC1L, NGRN, RPUSD3, RPUSD4, TRUB2, FASTKD2 and 16S mitochondrial ribosomal RNA (16S mt-rRNA), controls 16S mt-rRNA abundance and is required for intra-mitochondrial translation. Also catalyzes pseudouridylation of some tRNAs, including synthesis of pseudouridine(55) from uracil-55, in the psi GC loop of a subset of tRNAs. The sequence is that of Pseudouridylate synthase TRUB2, mitochondrial from Rattus norvegicus (Rat).